The chain runs to 303 residues: Putative S-adenosyl-L-methionine-dependent methyltransferase MAV_4435 (303 aa).

S-adenosyl-L-methionine-binding positions include Asp129 and 158-159; that span reads DL.

It belongs to the UPF0677 family.

In terms of biological role, exhibits S-adenosyl-L-methionine-dependent methyltransferase activity. This Mycobacterium avium (strain 104) protein is Putative S-adenosyl-L-methionine-dependent methyltransferase MAV_4435.